A 90-amino-acid polypeptide reads, in one-letter code: YcgL domain-containing protein YpsIP31758_2009 (90 aa).

The YcgL domain maps to 1–85; it reads MLCAIYRSPK…PPESLLKMHL (85 aa).

The protein is YcgL domain-containing protein YpsIP31758_2009 of Yersinia pseudotuberculosis serotype O:1b (strain IP 31758).